Here is a 615-residue protein sequence, read N- to C-terminus: MAVYLGMLRLGRLCVASLGARGPRTPLSRPWPNSKLQGVRAFSSGMVDCTNPLPIGGLSYIQGHTDSHLVNKTVGECLDATAQRFPNREALVIIHENIRLNFAQLKEEVDRAASGLLSIGLRKGDRLGMWGPNSYAWVLIQLATAQAGIILVSVNPAYQASELEYVLRKVGCKGIVFPKQFKTQQYYNILKQVCPELEKAQPGALKSERLPDLTTVISVDAPLPGTLLLDEVVAAGGKEQNLAQLRYHQGFLSCYDPINIQFTSGTTGNPKGATLSHHNIVNNSNLIGQRLKMPAKTAEELRMVLPCPLYHCLGSVGGTMVSVVHGATLLLSSPSFNGKKALEAISREKGTLLYGTPTMFVDILNQPDFSSYDFTTIRGGVIAGSLAPPELIRAIISKMNMKELVVVYGTTENSPVTFMNFPEDTLEQKAGSVGRIMPHTEAQIVNMETGELTKLNMPGELCIRGYCVMQGYWGEPQKTFETVGQDRWYRTGDIASMDEQGFCRIVGRSKDMIIRGGENIYPAELEDFFHKHPQVQEAQVVGVKDDRMGEEICACIRLKSGETTTEEEIKAFCKGKISHFKIPRYIVFVEGYPLTVSGKIQKFKLREQMEQHLKL.

The transit peptide at 1 to 49 directs the protein to the mitochondrion; it reads MAVYLGMLRLGRLCVASLGARGPRTPLSRPWPNSKLQGVRAFSSGMVDC. Lys179 is subject to N6-acetyllysine. N6-acetyllysine; alternate is present on Lys182. Lys182 is subject to N6-succinyllysine; alternate. Lys199 is subject to N6-acetyllysine. Residue 263–271 coordinates ATP; the sequence is TSGTTGNPK. Residues Lys340 and Lys398 each carry the N6-acetyllysine modification. Residue Lys478 is modified to N6-succinyllysine. Residues Asp493 and Arg508 each coordinate ATP. The residue at position 510 (Lys510) is an N6-acetyllysine. 2 positions are modified to N6-acetyllysine; alternate: Lys544 and Lys570. Lys544 and Lys570 each carry N6-succinyllysine; alternate. Lys599 is an ATP binding site. The residue at position 599 (Lys599) is an N6-succinyllysine.

This sequence belongs to the ATP-dependent AMP-binding enzyme family.

The protein resides in the mitochondrion. It carries out the reaction a medium-chain fatty acid + ATP + CoA = a medium-chain fatty acyl-CoA + AMP + diphosphate. It catalyses the reaction octanoate + ATP + CoA = octanoyl-CoA + AMP + diphosphate. Acyl-CoA synthases catalyze the initial reaction in fatty acid metabolism, by forming a thioester with CoA. Has some preference toward medium-chain substrates. Plays a role in adipocyte differentiation. The chain is Medium-chain acyl-CoA ligase ACSF2, mitochondrial from Rattus norvegicus (Rat).